The following is a 431-amino-acid chain: Tol-Pal system protein TolB (431 aa).

The signal sequence occupies residues 1 to 26 (MSLMTKLGFRALVASCLIAAGSAANA). Positions 411–431 (PQILSVQGGSVREPSWGPFMQ) are disordered.

It belongs to the TolB family. The Tol-Pal system is composed of five core proteins: the inner membrane proteins TolA, TolQ and TolR, the periplasmic protein TolB and the outer membrane protein Pal. They form a network linking the inner and outer membranes and the peptidoglycan layer.

The protein resides in the periplasm. Part of the Tol-Pal system, which plays a role in outer membrane invagination during cell division and is important for maintaining outer membrane integrity. The protein is Tol-Pal system protein TolB of Burkholderia multivorans (strain ATCC 17616 / 249).